The chain runs to 295 residues: NAD kinase (295 aa).

Catalysis depends on Asp73, which acts as the Proton acceptor. NAD(+) is bound by residues 73-74 (DG), Arg78, 146-147 (NE), Lys157, Arg174, Asp176, and 187-192 (TAYSLS).

It belongs to the NAD kinase family. A divalent metal cation serves as cofactor.

Its subcellular location is the cytoplasm. It carries out the reaction NAD(+) + ATP = ADP + NADP(+) + H(+). Involved in the regulation of the intracellular balance of NAD and NADP, and is a key enzyme in the biosynthesis of NADP. Catalyzes specifically the phosphorylation on 2'-hydroxyl of the adenosine moiety of NAD to yield NADP. This Wigglesworthia glossinidia brevipalpis protein is NAD kinase.